The sequence spans 340 residues: MTEASLNEAADAAIKAFDGAQNLDELAALRRDHLGDAAPIPQARRSLGTIPKDQRKDAGRFVNMALGRAEKHFAQVKVVLEEKRNAEVLELERVDVTVPTTREQVGALHPITILNEQIADIFVGMGWEIAEGPEVEAEYFNFDALNFLPDHPARTLQDTFHIAPEGSRQVLRTHTSPVQVRTMLNREVPIYIACPGRVFRTDELDATHTPVFHQIEGLAVDKGLTMAHLRGTLDHLAKELFGPETKTRMRSNYFPFTEPSAEVDVWFPNKKGGAGWIEWGGCGMVNPNVLRAVGVDPEEYTGFAFGMGIERTLQFRNGLSDMRDMVEGDIRFTLPFGIQA.

Glu-258 contacts Mg(2+).

This sequence belongs to the class-II aminoacyl-tRNA synthetase family. Phe-tRNA synthetase alpha subunit type 1 subfamily. As to quaternary structure, tetramer of two alpha and two beta subunits. Mg(2+) serves as cofactor.

The protein resides in the cytoplasm. It catalyses the reaction tRNA(Phe) + L-phenylalanine + ATP = L-phenylalanyl-tRNA(Phe) + AMP + diphosphate + H(+). This chain is Phenylalanine--tRNA ligase alpha subunit, found in Corynebacterium glutamicum (strain ATCC 13032 / DSM 20300 / JCM 1318 / BCRC 11384 / CCUG 27702 / LMG 3730 / NBRC 12168 / NCIMB 10025 / NRRL B-2784 / 534).